The sequence spans 369 residues: GTPase Obg (369 aa).

The Obg domain occupies 1–159 (MKFIDEAKIE…RELRLELKVL (159 aa)). The disordered stretch occupies residues 128–148 (IHFKSSTNRAPRQKSEGKEGE). The OBG-type G domain maps to 160–333 (ADIGLLGMPN…LVTEIYEYIA (174 aa)). Residues 166-173 (GMPNAGKS), 191-195 (FTTLH), 213-216 (DIPG), 283-286 (NKLD), and 314-316 (SAL) each bind GTP. Mg(2+)-binding residues include S173 and T193.

This sequence belongs to the TRAFAC class OBG-HflX-like GTPase superfamily. OBG GTPase family. In terms of assembly, monomer. It depends on Mg(2+) as a cofactor.

It localises to the cytoplasm. Functionally, an essential GTPase which binds GTP, GDP and possibly (p)ppGpp with moderate affinity, with high nucleotide exchange rates and a fairly low GTP hydrolysis rate. Plays a role in control of the cell cycle, stress response, ribosome biogenesis and in those bacteria that undergo differentiation, in morphogenesis control. The chain is GTPase Obg from Janthinobacterium sp. (strain Marseille) (Minibacterium massiliensis).